The chain runs to 191 residues: Pyridoxal 5'-phosphate synthase subunit PdxT (191 aa).

Position 46–48 (46–48 (GES)) interacts with L-glutamine. Cys78 functions as the Nucleophile in the catalytic mechanism. L-glutamine contacts are provided by residues Arg105 and 134–135 (IR). Catalysis depends on charge relay system residues His170 and Glu172.

Belongs to the glutaminase PdxT/SNO family. In the presence of PdxS, forms a dodecamer of heterodimers. Only shows activity in the heterodimer.

It carries out the reaction aldehydo-D-ribose 5-phosphate + D-glyceraldehyde 3-phosphate + L-glutamine = pyridoxal 5'-phosphate + L-glutamate + phosphate + 3 H2O + H(+). The catalysed reaction is L-glutamine + H2O = L-glutamate + NH4(+). Its pathway is cofactor biosynthesis; pyridoxal 5'-phosphate biosynthesis. Catalyzes the hydrolysis of glutamine to glutamate and ammonia as part of the biosynthesis of pyridoxal 5'-phosphate. The resulting ammonia molecule is channeled to the active site of PdxS. The sequence is that of Pyridoxal 5'-phosphate synthase subunit PdxT from Carboxydothermus hydrogenoformans (strain ATCC BAA-161 / DSM 6008 / Z-2901).